A 289-amino-acid chain; its full sequence is Nucleotide-binding protein CHY_0272 (289 aa).

Position 8 to 15 (8 to 15 (GLSGAGKT)) interacts with ATP. Residue 59–62 (DVRG) coordinates GTP.

It belongs to the RapZ-like family.

Functionally, displays ATPase and GTPase activities. This chain is Nucleotide-binding protein CHY_0272, found in Carboxydothermus hydrogenoformans (strain ATCC BAA-161 / DSM 6008 / Z-2901).